The primary structure comprises 87 residues: MVNMKASMFLTFAGLVLLFVVCYASESEEKEFPKEMLSSIFAVDNDFKQGERDCAGYMRECKEKLCCSGYVCSSRWKWCVLPAPWRR.

An N-terminal signal peptide occupies residues M1 to A24. Residues S25–R52 constitute a propeptide that is removed on maturation. 3 disulfide bridges follow: C54/C67, C61/C72, and C66/C79.

This sequence belongs to the neurotoxin 10 (Hwtx-1) family. 51 (Hntx-8) subfamily. Hntx-8 sub-subfamily. As to expression, expressed by the venom gland.

Its subcellular location is the secreted. Its function is as follows. Ion channel inhibitor. The chain is U3-theraphotoxin-Hhn1a 16 from Cyriopagopus hainanus (Chinese bird spider).